The sequence spans 302 residues: RNA polymerase II holoenzyme cyclin-like subunit (302 aa).

The 90-residue stretch at 53-142 folds into the Cyclin N-terminal domain; that stretch reads QQLIKLGKRM…LGECEFSLIS (90 aa).

The protein belongs to the cyclin family. Cyclin C subfamily. Component of the srb8-11 complex, a regulatory module of the Mediator complex.

Its subcellular location is the nucleus. In terms of biological role, component of the srb8-11 complex. The srb8-11 complex is a regulatory module of the Mediator complex which is itself involved in regulation of basal and activated RNA polymerase II-dependent transcription. The srb8-11 complex may be involved in the transcriptional repression of a subset of genes regulated by Mediator. It may inhibit the association of the Mediator complex with RNA polymerase II to form the holoenzyme complex. The srb8-11 complex phosphorylates the C-terminal domain (CTD) of the largest subunit of RNA polymerase II. This Aspergillus clavatus (strain ATCC 1007 / CBS 513.65 / DSM 816 / NCTC 3887 / NRRL 1 / QM 1276 / 107) protein is RNA polymerase II holoenzyme cyclin-like subunit (ssn8).